The primary structure comprises 127 residues: Snaclec CHH-B subunit alpha (127 aa).

3 disulfide bridges follow: Cys4/Cys15, Cys32/Cys120, and Cys95/Cys112. Positions 11 to 121 constitute a C-type lectin domain; the sequence is YDRYCYKPFK…CEQQHSFICK (111 aa).

The protein belongs to the snaclec family. In terms of assembly, heterodimer of subunits alpha and beta; disulfide-linked. As to expression, expressed by the venom gland.

The protein resides in the secreted. In terms of biological role, binds to the subunit GPIbalpha (GP1BA) of the platelet GPIb/V/IX receptor system. It inhibits ristocetin- and vWF-induced platelet aggregation in platelet-rich plasma by inhibiting the binding of vWF to GPIbalpha. The protein is Snaclec CHH-B subunit alpha of Crotalus horridus (Timber rattlesnake).